Here is a 349-residue protein sequence, read N- to C-terminus: Anthranilate phosphoribosyltransferase (349 aa).

Residues Gly-82, 85–86 (GD), 92–95 (NVST), 110–118 (KHGNRAVSG), and Ser-122 each bind 5-phospho-alpha-D-ribose 1-diphosphate. An anthranilate-binding site is contributed by Gly-82. Ser-94 lines the Mg(2+) pocket. Asn-113 lines the anthranilate pocket. Arg-168 serves as a coordination point for anthranilate. Mg(2+)-binding residues include Asp-227 and Glu-228.

Belongs to the anthranilate phosphoribosyltransferase family. Homodimer. Requires Mg(2+) as cofactor.

It carries out the reaction N-(5-phospho-beta-D-ribosyl)anthranilate + diphosphate = 5-phospho-alpha-D-ribose 1-diphosphate + anthranilate. It functions in the pathway amino-acid biosynthesis; L-tryptophan biosynthesis; L-tryptophan from chorismate: step 2/5. Its function is as follows. Catalyzes the transfer of the phosphoribosyl group of 5-phosphorylribose-1-pyrophosphate (PRPP) to anthranilate to yield N-(5'-phosphoribosyl)-anthranilate (PRA). In Pseudomonas entomophila (strain L48), this protein is Anthranilate phosphoribosyltransferase.